The primary structure comprises 89 residues: MSLSVEAKAKIVAEFGRDAKDTGSSEVQIALLTAQINHLQAHFAEHKKDHHGRRGLLRMVSRRRKLLDYLKRTDLAKYSETIARLGLRR.

This sequence belongs to the universal ribosomal protein uS15 family. As to quaternary structure, part of the 30S ribosomal subunit. Forms a bridge to the 50S subunit in the 70S ribosome, contacting the 23S rRNA.

One of the primary rRNA binding proteins, it binds directly to 16S rRNA where it helps nucleate assembly of the platform of the 30S subunit by binding and bridging several RNA helices of the 16S rRNA. In terms of biological role, forms an intersubunit bridge (bridge B4) with the 23S rRNA of the 50S subunit in the ribosome. In Actinobacillus pleuropneumoniae serotype 5b (strain L20), this protein is Small ribosomal subunit protein uS15.